The primary structure comprises 699 residues: Catalase-peroxidase (699 aa).

The tryptophyl-tyrosyl-methioninium (Trp-Tyr) (with M-226) cross-link spans Trp-72–Tyr-200. The Proton acceptor role is filled by His-73. The segment at residues Tyr-200–Met-226 is a cross-link (tryptophyl-tyrosyl-methioninium (Tyr-Met) (with W-72)). Residue His-241 coordinates heme b.

Belongs to the peroxidase family. Peroxidase/catalase subfamily. Homodimer or homotetramer. Heme b is required as a cofactor. Formation of the three residue Trp-Tyr-Met cross-link is important for the catalase, but not the peroxidase activity of the enzyme.

The enzyme catalyses H2O2 + AH2 = A + 2 H2O. It carries out the reaction 2 H2O2 = O2 + 2 H2O. Bifunctional enzyme with both catalase and broad-spectrum peroxidase activity. The chain is Catalase-peroxidase from Aeromonas salmonicida (strain A449).